The chain runs to 376 residues: MGLLAYLKTQFVVHLLIGFVFVVSGLIINFTQLCTLALWPISKHLYRRINCRLAYSLWSQLVMLLEWWSCTECTLFTDQATVDHFGKEHVVVILNHNFEIDFLCGWTMCERFGVLGSSKVLAKRELLCVPLIGWTWYFLEIVFCKRKWEEDRDTVIEGLRRLADYPEYMWFLLYCEGTRFTETKHRISMEVAASKGLPPLKYHLLPRTKGFTTAVQCLRGTVAAIYDVTLNFRGNKNPSLLGILYGKKYEADMCVRRFPLEDIPADETSAAQWLHKLYQEKDALQEMYKQKGVFPGEQFKPARRPWTLLNFLCWATILLSPLFSFVLGVFASGSPLLILTFLGFVGAASFGVRRLIGVTEIEKGSSYGNQELKKKE.

At 1-124 (MGLLAYLKTQ…LGSSKVLAKR (124 aa)) the chain is on the cytoplasmic side. The short motif at 96–101 (HNFEID) is the HXXXXD motif element. Residues 125 to 145 (ELLCVPLIGWTWYFLEIVFCK) traverse the membrane as a helical segment. Over 146–316 (RKWEEDRDTV…TLLNFLCWAT (171 aa)) the chain is Lumenal. Residues 317–339 (ILLSPLFSFVLGVFASGSPLLIL) traverse the membrane as a helical segment. Residues 340 to 376 (TFLGFVGAASFGVRRLIGVTEIEKGSSYGNQELKKKE) lie on the Cytoplasmic side of the membrane.

This sequence belongs to the 1-acyl-sn-glycerol-3-phosphate acyltransferase family. As to expression, widely expressed. Mainly expressed in testis, kidney and liver (at protein level).

Its subcellular location is the endoplasmic reticulum membrane. It is found in the nucleus envelope. It catalyses the reaction a 1-acyl-sn-glycero-3-phosphate + an acyl-CoA = a 1,2-diacyl-sn-glycero-3-phosphate + CoA. The catalysed reaction is pentadecanoyl-CoA + 1-(9Z-octadecenoyl)-sn-glycero-3-phosphate = 1-(9Z)-octadecenoyl-2-pentadecanoyl-sn-glycero-3-phosphate + CoA. It carries out the reaction heptadecanoyl-CoA + 1-(9Z-octadecenoyl)-sn-glycero-3-phosphate = 1-(9Z)-octadecenoyl-2-heptadecanoyl-sn-glycero-3-phosphate + CoA. The enzyme catalyses 1-(9Z-octadecenoyl)-sn-glycero-3-phosphate + octadecanoyl-CoA = 1-(9Z-octadecenoyl)-2-octadecanoyl-sn-glycero-3-phosphate + CoA. It catalyses the reaction nonadecanoyl-CoA + 1-(9Z-octadecenoyl)-sn-glycero-3-phosphate = 1-(9Z)-octadecenoyl-2-nonadecanoyl-sn-glycero-3-phosphate + CoA. The catalysed reaction is 1-(9Z-octadecenoyl)-sn-glycero-3-phosphate + (5Z,8Z,11Z,14Z)-eicosatetraenoyl-CoA = 1-(9Z)-octadecenoyl-2-(5Z,8Z,11Z,14Z)-eicosatetraenoyl-sn-glycero-3-phosphate + CoA. It carries out the reaction 1-(9Z-octadecenoyl)-sn-glycero-3-phosphate + (9Z)-octadecenoyl-CoA = 1,2-di-(9Z-octadecenoyl)-sn-glycero-3-phosphate + CoA. The enzyme catalyses 1-(9Z-octadecenoyl)-sn-glycero-3-phosphate + (9Z,12Z)-octadecadienoyl-CoA = 1-(9Z)-octadecenoyl-2-(9Z,12Z)-octadecadienoyl-sn-glycero-3-phosphate + CoA. It catalyses the reaction 1-(9Z-octadecenoyl)-sn-glycero-3-phosphocholine + (5Z,8Z,11Z,14Z)-eicosatetraenoyl-CoA = 1-(9Z)-octadecenoyl-2-(5Z,8Z,11Z,14Z)-icosatetraenoyl-sn-glycero-3-phosphocholine + CoA. The catalysed reaction is 1-(9Z-octadecenoyl)-sn-glycero-3-phospho-(1D-myo-inositol) + (5Z,8Z,11Z,14Z)-eicosatetraenoyl-CoA = 1-(9Z-octadecenoyl)-2-(5Z,8Z,11Z,14Z-eicosatetraenoyl)-sn-glycero-3-phospho-1D-myo-inositol + CoA. It carries out the reaction 1-(9Z-octadecenoyl)-sn-glycero-3-phospho-L-serine + (5Z,8Z,11Z,14Z)-eicosatetraenoyl-CoA = 1-(9Z-octadecenoyl)-2-(5Z,8Z,11Z,14Z-eicosatetraenoyl)-sn-glycero-3-phospho-L-serine + CoA. The enzyme catalyses 1-hexadecanoyl-sn-glycero-3-phosphate + (9Z)-octadecenoyl-CoA = 1-hexadecanoyl-2-(9Z-octadecenoyl)-sn-glycero-3-phosphate + CoA. It catalyses the reaction 1-hexadecanoyl-sn-glycero-3-phosphate + (5Z,8Z,11Z,14Z)-eicosatetraenoyl-CoA = 1-hexadecanoyl-2-(5Z,8Z,11Z,14Z-eicosatetraenoyl)-sn-glycero-3-phosphate + CoA. The catalysed reaction is 1-heptadecanoyl-sn-glycero-3-phosphate + (5Z,8Z,11Z,14Z)-eicosatetraenoyl-CoA = 1-heptadecanoyl-2-(5Z,8Z,11Z,14Z)-eicosatetraenoyl-sn-glycero-3-phosphate + CoA. It carries out the reaction 1-octadecanoyl-sn-glycero-3-phosphate + (9Z)-octadecenoyl-CoA = 1-octadecanoyl-2-(9Z-octadecenoyl)-sn-glycero-3-phosphate + CoA. The enzyme catalyses 1-octadecanoyl-sn-glycero-3-phosphate + (5Z,8Z,11Z,14Z)-eicosatetraenoyl-CoA = 1-octadecanoyl-2-(5Z,8Z,11Z,14Z-eicosatetraenoyl)-sn-glycero-3-phosphate + CoA. It catalyses the reaction 1-(9Z-octadecenoyl)-sn-glycero-3-phosphate + hexadecanoyl-CoA = 1-hexadecanoyl-2-(9Z-octadecenoyl)-sn-glycero-3-phosphate + CoA. The catalysed reaction is 1-O-(9Z-octadecenyl)-sn-glycero-3-phosphate + (5Z,8Z,11Z,14Z)-eicosatetraenoyl-CoA = 1-O-(9Z-octadecenyl)-2-(5Z,8Z,11Z,14Z-eicosatetraenoyl)-sn-glycero-3-phosphate + CoA. It carries out the reaction a 1-acyl-sn-glycero-3-phospho-(1D-myo-inositol) + (5Z,8Z,11Z,14Z)-eicosatetraenoyl-CoA = a 1-acyl-2-(5Z,8Z,11Z,14Z-eicosatetraenoyl)-sn-glycero-3-phospho-(1D-myo-inositol) + CoA. It functions in the pathway phospholipid metabolism; CDP-diacylglycerol biosynthesis; CDP-diacylglycerol from sn-glycerol 3-phosphate: step 2/3. With respect to regulation, in males, activity increases in an age-dependent fashion, maybe derived from the induction by sex-hormones. Converts 1-acyl-sn-glycerol-3-phosphate (lysophosphatidic acid or LPA) into 1,2-diacyl-sn-glycerol-3-phosphate (phosphatidic acid or PA) by incorporating an acyl moiety at the sn-2 position of the glycerol backbone. Acts on LPA containing saturated or unsaturated fatty acids C16:0-C20:4 at the sn-1 position using C18:1, C20:4 or C18:2-CoA as the acyl donor. Also acts on lysophosphatidylcholine, lysophosphatidylinositol and lysophosphatidylserine using C18:1 or C20:4-CoA. Has a preference for arachidonoyl-CoA as a donor. Also has a modest lysophosphatidylinositol acyltransferase (LPIAT) activity, converts lysophosphatidylinositol (LPI) into phosphatidylinositol. The chain is 1-acyl-sn-glycerol-3-phosphate acyltransferase gamma from Mus musculus (Mouse).